A 354-amino-acid chain; its full sequence is UDP-N-acetylglucosamine--N-acetylmuramyl-(pentapeptide) pyrophosphoryl-undecaprenol N-acetylglucosamine transferase (354 aa).

Residues 15–17, Asn127, Arg163, Ser191, Ile244, 263–268, and Gln288 each bind UDP-N-acetyl-alpha-D-glucosamine; these read TGG and ALTVSE.

Belongs to the glycosyltransferase 28 family. MurG subfamily.

Its subcellular location is the cell inner membrane. It catalyses the reaction di-trans,octa-cis-undecaprenyl diphospho-N-acetyl-alpha-D-muramoyl-L-alanyl-D-glutamyl-meso-2,6-diaminopimeloyl-D-alanyl-D-alanine + UDP-N-acetyl-alpha-D-glucosamine = di-trans,octa-cis-undecaprenyl diphospho-[N-acetyl-alpha-D-glucosaminyl-(1-&gt;4)]-N-acetyl-alpha-D-muramoyl-L-alanyl-D-glutamyl-meso-2,6-diaminopimeloyl-D-alanyl-D-alanine + UDP + H(+). Its pathway is cell wall biogenesis; peptidoglycan biosynthesis. Its function is as follows. Cell wall formation. Catalyzes the transfer of a GlcNAc subunit on undecaprenyl-pyrophosphoryl-MurNAc-pentapeptide (lipid intermediate I) to form undecaprenyl-pyrophosphoryl-MurNAc-(pentapeptide)GlcNAc (lipid intermediate II). The sequence is that of UDP-N-acetylglucosamine--N-acetylmuramyl-(pentapeptide) pyrophosphoryl-undecaprenol N-acetylglucosamine transferase from Vibrio cholerae serotype O1 (strain ATCC 39315 / El Tor Inaba N16961).